We begin with the raw amino-acid sequence, 169 residues long: Peptide methionine sulfoxide reductase MsrA (169 aa).

Cys-10 is an active-site residue.

It belongs to the MsrA Met sulfoxide reductase family.

It catalyses the reaction L-methionyl-[protein] + [thioredoxin]-disulfide + H2O = L-methionyl-(S)-S-oxide-[protein] + [thioredoxin]-dithiol. The enzyme catalyses [thioredoxin]-disulfide + L-methionine + H2O = L-methionine (S)-S-oxide + [thioredoxin]-dithiol. In terms of biological role, has an important function as a repair enzyme for proteins that have been inactivated by oxidation. Catalyzes the reversible oxidation-reduction of methionine sulfoxide in proteins to methionine. The protein is Peptide methionine sulfoxide reductase MsrA of Streptococcus pyogenes serotype M2 (strain MGAS10270).